We begin with the raw amino-acid sequence, 137 residues long: Small ribosomal subunit protein uS12 (137 aa).

2 disordered regions span residues 1–21 and 34–57; these read MPTINQLVRKPRKSKIEKSDS and VHTKIAAPQKRGVATRVGTMTPKK. Aspartate 102 carries the 3-methylthioaspartic acid modification.

Belongs to the universal ribosomal protein uS12 family. Part of the 30S ribosomal subunit. Contacts proteins S8 and S17. May interact with IF1 in the 30S initiation complex.

Functionally, with S4 and S5 plays an important role in translational accuracy. In terms of biological role, interacts with and stabilizes bases of the 16S rRNA that are involved in tRNA selection in the A site and with the mRNA backbone. Located at the interface of the 30S and 50S subunits, it traverses the body of the 30S subunit contacting proteins on the other side and probably holding the rRNA structure together. The combined cluster of proteins S8, S12 and S17 appears to hold together the shoulder and platform of the 30S subunit. This is Small ribosomal subunit protein uS12 from Streptococcus uberis (strain ATCC BAA-854 / 0140J).